Here is a 722-residue protein sequence, read N- to C-terminus: Zinc finger BED domain-containing protein RICESLEEPER 2 (722 aa).

The BED-type zinc-finger motif lies at 66–134 (RKKSLVWEHF…QEHKLALTPA (69 aa)). Residues Cys89, Cys92, His113, and His127 each contribute to the Zn(2+) site. The segment at 572-592 (VEQGDGNNAPASENGTQATAP) is disordered. A compositionally biased stretch (polar residues) spans 576–592 (DGNNAPASENGTQATAP). The segment at 617 to 702 (ELEQYLDESL…EALVCAKDWL (86 aa)) is HATC (Hobo-Ac-Tam3) domain.

In terms of assembly, homodimer.

Its subcellular location is the nucleus. Transposase-like protein that is essential for plant growth and development. May regulate global gene expression by recruiting other cellular factors. The protein is Zinc finger BED domain-containing protein RICESLEEPER 2 of Oryza sativa subsp. japonica (Rice).